Reading from the N-terminus, the 432-residue chain is Enolase (432 aa).

Glutamine 164 is a (2R)-2-phosphoglycerate binding site. The active-site Proton donor is glutamate 206. Aspartate 243, glutamate 284, and aspartate 311 together coordinate Mg(2+). Residues lysine 336, arginine 365, serine 366, and lysine 387 each coordinate (2R)-2-phosphoglycerate. Lysine 336 serves as the catalytic Proton acceptor.

Belongs to the enolase family. Mg(2+) is required as a cofactor.

It localises to the cytoplasm. The protein localises to the secreted. It is found in the cell surface. The catalysed reaction is (2R)-2-phosphoglycerate = phosphoenolpyruvate + H2O. It participates in carbohydrate degradation; glycolysis; pyruvate from D-glyceraldehyde 3-phosphate: step 4/5. Catalyzes the reversible conversion of 2-phosphoglycerate (2-PG) into phosphoenolpyruvate (PEP). It is essential for the degradation of carbohydrates via glycolysis. The protein is Enolase of Synechococcus sp. (strain JA-3-3Ab) (Cyanobacteria bacterium Yellowstone A-Prime).